Here is a 445-residue protein sequence, read N- to C-terminus: Ribosomal protein uS12 methylthiotransferase RimO (445 aa).

One can recognise an MTTase N-terminal domain in the interval 11-121 (PKISFVSLGC…VLDAVHRASP (111 aa)). 6 residues coordinate [4Fe-4S] cluster: Cys20, Cys56, Cys85, Cys152, Cys156, and Cys159. Residues 138-375 (LTPRHYAYLK…MARQQKISAR (238 aa)) enclose the Radical SAM core domain. A TRAM domain is found at 378-444 (KRKVGTRQQI…EYDLHGTVAG (67 aa)).

The protein belongs to the methylthiotransferase family. RimO subfamily. It depends on [4Fe-4S] cluster as a cofactor.

It is found in the cytoplasm. It catalyses the reaction L-aspartate(89)-[ribosomal protein uS12]-hydrogen + (sulfur carrier)-SH + AH2 + 2 S-adenosyl-L-methionine = 3-methylsulfanyl-L-aspartate(89)-[ribosomal protein uS12]-hydrogen + (sulfur carrier)-H + 5'-deoxyadenosine + L-methionine + A + S-adenosyl-L-homocysteine + 2 H(+). Its function is as follows. Catalyzes the methylthiolation of an aspartic acid residue of ribosomal protein uS12. The protein is Ribosomal protein uS12 methylthiotransferase RimO of Bradyrhizobium sp. (strain ORS 278).